The following is a 335-amino-acid chain: Biotin synthase (335 aa).

Positions 46-274 (YNIQLASLFS…KSKIRLSAGR (229 aa)) constitute a Radical SAM core domain. Residues C61, C65, and C68 each contribute to the [4Fe-4S] cluster site. The [2Fe-2S] cluster site is built by C105, C137, C197, and R269.

The protein belongs to the radical SAM superfamily. Biotin synthase family. In terms of assembly, homodimer. The cofactor is [4Fe-4S] cluster. [2Fe-2S] cluster serves as cofactor.

The catalysed reaction is (4R,5S)-dethiobiotin + (sulfur carrier)-SH + 2 reduced [2Fe-2S]-[ferredoxin] + 2 S-adenosyl-L-methionine = (sulfur carrier)-H + biotin + 2 5'-deoxyadenosine + 2 L-methionine + 2 oxidized [2Fe-2S]-[ferredoxin]. The protein operates within cofactor biosynthesis; biotin biosynthesis; biotin from 7,8-diaminononanoate: step 2/2. Functionally, catalyzes the conversion of dethiobiotin (DTB) to biotin by the insertion of a sulfur atom into dethiobiotin via a radical-based mechanism. This chain is Biotin synthase, found in Prochlorococcus marinus (strain AS9601).